A 297-amino-acid polypeptide reads, in one-letter code: 33 kDa chaperonin (297 aa).

Cystine bridges form between cysteine 239–cysteine 241 and cysteine 272–cysteine 275.

It belongs to the HSP33 family. Under oxidizing conditions two disulfide bonds are formed involving the reactive cysteines. Under reducing conditions zinc is bound to the reactive cysteines and the protein is inactive.

It localises to the cytoplasm. In terms of biological role, redox regulated molecular chaperone. Protects both thermally unfolding and oxidatively damaged proteins from irreversible aggregation. Plays an important role in the bacterial defense system toward oxidative stress. This Clostridium acetobutylicum (strain ATCC 824 / DSM 792 / JCM 1419 / IAM 19013 / LMG 5710 / NBRC 13948 / NRRL B-527 / VKM B-1787 / 2291 / W) protein is 33 kDa chaperonin.